Reading from the N-terminus, the 344-residue chain is Fructose-1,6-bisphosphatase class 1 (344 aa).

The Mg(2+) site is built by E91, D110, L112, and D113. Residues 113–116 and N200 each bind substrate; that span reads DGSS. E272 contributes to the Mg(2+) binding site.

This sequence belongs to the FBPase class 1 family. As to quaternary structure, homotetramer. It depends on Mg(2+) as a cofactor.

The protein resides in the cytoplasm. The catalysed reaction is beta-D-fructose 1,6-bisphosphate + H2O = beta-D-fructose 6-phosphate + phosphate. It functions in the pathway carbohydrate biosynthesis; Calvin cycle. The sequence is that of Fructose-1,6-bisphosphatase class 1 from Rhodopseudomonas palustris (strain BisB18).